The sequence spans 365 residues: Eukaryotic translation initiation factor 3 subunit H (365 aa).

Positions 11-160 constitute an MPN domain; the sequence is VQVEALVVMK…LRAFRLSPQF (150 aa). The stretch at 273-303 forms a coiled coil; that stretch reads YQRSLAREQTKIAAWQAKRKAENATRAQLKQ.

Belongs to the eIF-3 subunit H family. As to quaternary structure, component of the eukaryotic translation initiation factor 3 (eIF-3) complex.

It localises to the cytoplasm. Component of the eukaryotic translation initiation factor 3 (eIF-3) complex, which is involved in protein synthesis of a specialized repertoire of mRNAs and, together with other initiation factors, stimulates binding of mRNA and methionyl-tRNAi to the 40S ribosome. The eIF-3 complex specifically targets and initiates translation of a subset of mRNAs involved in cell proliferation. The polypeptide is Eukaryotic translation initiation factor 3 subunit H (Coccidioides immitis (strain RS) (Valley fever fungus)).